A 378-amino-acid polypeptide reads, in one-letter code: MDSTTHGPRTHVPGRLFIGLMSGTSMDGADGVLVRLDGPRPEVLASASLPMPAALRDELFALNHAGANELERAALAANGLARLYARAVRQLLDQAGLQPGDVAAIGAHGQTVRHRPDLGYTLQLNAPALLAELAGIDVVADFRSRDVAAGGQGAPLVPPFHAALFAGGQARAVLNLGGIANVTLLEPGRPPRGFDTGPANVLLDAWCQRHTGQPYDADGRFAAQGQVLAGLLEHLIASEPWFALAPPKSTGRDLFNLDWLLARLQAFDGPAPQPQDVQATLQRLTARTVANAIDASAAAPRDVLVCGGGARNPGLMRELAYCLQRPVHPTDDAGVPAQWVEALAFAWLAQACLDRIPAGLPTVTGARAARVLGALYPA.

Residue 23–30 (GTSMDGAD) participates in ATP binding.

The protein belongs to the anhydro-N-acetylmuramic acid kinase family.

The enzyme catalyses 1,6-anhydro-N-acetyl-beta-muramate + ATP + H2O = N-acetyl-D-muramate 6-phosphate + ADP + H(+). The protein operates within amino-sugar metabolism; 1,6-anhydro-N-acetylmuramate degradation. It functions in the pathway cell wall biogenesis; peptidoglycan recycling. Functionally, catalyzes the specific phosphorylation of 1,6-anhydro-N-acetylmuramic acid (anhMurNAc) with the simultaneous cleavage of the 1,6-anhydro ring, generating MurNAc-6-P. Is required for the utilization of anhMurNAc either imported from the medium or derived from its own cell wall murein, and thus plays a role in cell wall recycling. This is Anhydro-N-acetylmuramic acid kinase from Bordetella bronchiseptica (strain ATCC BAA-588 / NCTC 13252 / RB50) (Alcaligenes bronchisepticus).